The following is an 822-amino-acid chain: Fibroblast growth factor receptor 1 (822 aa).

A signal peptide spans 1-21; sequence MWGWRGLLFWAVLVTATLCTA. Topologically, residues 22 to 376 are extracellular; sequence RPAPTLPEQA…AVMTSPLYLE (355 aa). The Ig-like C2-type 1 domain maps to 25–119; the sequence is PTLPEQAQPW…DTTYFSVNVS (95 aa). Cysteine 55 and cysteine 101 are oxidised to a cystine. N-linked (GlcNAc...) asparagine glycosylation is found at asparagine 77 and asparagine 117. The tract at residues 120 to 162 is disordered; sequence DALPSSEDDDDDDDSSSEEKETDNTKPNRRPVAPYWTSPEKME. The segment covering 125 to 135 has biased composition (acidic residues); the sequence is SEDDDDDDDSS. The segment covering 136-145 has biased composition (basic and acidic residues); that stretch reads SEEKETDNTK. Ig-like C2-type domains are found at residues 158–246 and 255–357; these read PEKM…YQLD and PILQ…AWLT. A heparin-binding region spans residues 160–177; the sequence is KMEKKLHAVPAAKTVKFK. A disulfide bond links cysteine 178 and cysteine 230. N-linked (GlcNAc...) asparagine glycosylation is found at asparagine 227, asparagine 240, asparagine 264, asparagine 296, asparagine 317, and asparagine 330. Cysteine 277 and cysteine 341 are oxidised to a cystine. The chain crosses the membrane as a helical span at residues 377–397; that stretch reads IIIYCTGAFLISCMVGSVIIY. The Cytoplasmic portion of the chain corresponds to 398–822; the sequence is KMKSGTKKSD…QLANGGLNRR (425 aa). Tyrosine 463 carries the post-translational modification Phosphotyrosine; by autocatalysis. The Protein kinase domain maps to 478 to 767; that stretch reads LVLGKPLGEG…VALTSNQEYL (290 aa). ATP-binding positions include 484-490, lysine 514, 562-564, and asparagine 568; these read LGEGCFG and EYA. Phosphotyrosine; by autocatalysis is present on residues tyrosine 583 and tyrosine 585. Aspartate 623 (proton acceptor) is an active-site residue. ATP-binding residues include arginine 627 and aspartate 641. Residues tyrosine 653, tyrosine 654, tyrosine 730, and tyrosine 766 each carry the phosphotyrosine; by autocatalysis modification. Residues 770–822 are disordered; the sequence is SMPLDQDSPSFPDTRSSTCSSGEDSVFSHEPFPEEPCLPRHPTQLANGGLNRR. The span at 776–792 shows a compositional bias: polar residues; the sequence is DSPSFPDTRSSTCSSGE.

The protein belongs to the protein kinase superfamily. Tyr protein kinase family. Fibroblast growth factor receptor subfamily. In terms of assembly, monomer. Homodimer after ligand binding. Interacts predominantly with FGF1 and FGF2, but can also interact with FGF3, FGF4, FGF5, FGF6, FGF8, FGF10, FGF19, FGF21, FGF22 and FGF23 (in vitro). Ligand specificity is determined by tissue-specific expression of isoforms, and differences in the third Ig-like domain are crucial for ligand specificity. Affinity for fibroblast growth factors (FGFs) is increased by heparan sulfate glycosaminoglycans that function as coreceptors. Likewise, KLB increases the affinity for FGF19, FGF21 and FGF23. Interacts (phosphorylated on Tyr-766) with PLCG1 (via SH2 domains). Interacts with FRS2. Interacts (via C-terminus) with NEDD4 (via WW3 domain). Interacts with RPS6KA1. Interacts with KL. Interacts with SHB (via SH2 domain) and GRB10. Interacts with ANOS1; this interaction does not interfere with FGF2-binding to FGFR1, but prevents binding of heparin-bound FGF2. Interacts with SOX2 and SOX3. Interacts with FLRT1, FLRT2 and FLRT3. Found in a ternary complex with FGF1 and ITGAV:ITGB3. Autophosphorylated. Binding of FGF family members together with heparan sulfate proteoglycan or heparin promotes receptor dimerization and autophosphorylation on tyrosine residues. Autophosphorylation occurs in trans between the two FGFR molecules present in the dimer and proceeds in a highly ordered manner. Initial autophosphorylation at Tyr-653 increases the kinase activity by a factor of 50 to 100. After this, Tyr-583 becomes phosphorylated, followed by phosphorylation of Tyr-463, Tyr-766, Tyr-583 and Tyr-585. In a third stage, Tyr-654 is autophosphorylated, resulting in a further tenfold increase of kinase activity. Phosphotyrosine residues provide docking sites for interacting proteins and so are crucial for FGFR1 function and its regulation. Post-translationally, ubiquitinated. FGFR1 is rapidly ubiquitinated by NEDD4 after autophosphorylation, leading to internalization and lysosomal degradation. CBL is recruited to activated FGFR1 via FRS2 and GRB2, and mediates ubiquitination and subsequent degradation of FGFR1. In terms of processing, N-glycosylated in the endoplasmic reticulum. The N-glycan chains undergo further maturation to an Endo H-resistant form in the Golgi apparatus. As to expression, expressed in the parathyroid.

Its subcellular location is the cell membrane. It is found in the nucleus. The protein resides in the cytoplasm. It localises to the cytosol. The protein localises to the cytoplasmic vesicle. It catalyses the reaction L-tyrosyl-[protein] + ATP = O-phospho-L-tyrosyl-[protein] + ADP + H(+). Its activity is regulated as follows. Present in an inactive conformation in the absence of bound ligand. Ligand binding leads to dimerization and activation by sequential autophosphorylation on tyrosine residues. Its function is as follows. Tyrosine-protein kinase that acts as a cell-surface receptor for fibroblast growth factors and plays an essential role in the regulation of embryonic development, cell proliferation, differentiation and migration. Required for normal mesoderm patterning and correct axial organization during embryonic development, normal skeletogenesis and normal development of the gonadotropin-releasing hormone (GnRH) neuronal system. Phosphorylates PLCG1, FRS2, GAB1 and SHB. Ligand binding leads to the activation of several signaling cascades. Activation of PLCG1 leads to the production of the cellular signaling molecules diacylglycerol and inositol 1,4,5-trisphosphate. Phosphorylation of FRS2 triggers recruitment of GRB2, GAB1, PIK3R1 and SOS1, and mediates activation of RAS, MAPK1/ERK2, MAPK3/ERK1 and the MAP kinase signaling pathway, as well as of the AKT1 signaling pathway. Promotes phosphorylation of SHC1, STAT1 and PTPN11/SHP2. In the nucleus, enhances RPS6KA1 and CREB1 activity and contributes to the regulation of transcription. FGFR1 signaling is down-regulated by IL17RD/SEF, and by FGFR1 ubiquitination, internalization and degradation. This chain is Fibroblast growth factor receptor 1 (Fgfr1), found in Rattus norvegicus (Rat).